The sequence spans 563 residues: Benzaldehyde lyase (563 aa).

Belongs to the TPP enzyme family. A metal cation is required as a cofactor. The cofactor is thiamine diphosphate.

It carries out the reaction benzoin = 2 benzaldehyde. Its function is as follows. Cleavage of benzoin-anisoin acyloin linkage. This is Benzaldehyde lyase (bznB) from Pseudomonas fluorescens.